The chain runs to 915 residues: Isoleucine--tRNA ligase (915 aa).

The 'HIGH' region signature appears at 58 to 68; sequence PYANGHLHIGH. Glutamate 568 is a binding site for L-isoleucyl-5'-AMP. Positions 609-613 match the 'KMSKS' region motif; that stretch reads KMSKS. Lysine 612 lines the ATP pocket. Positions 892, 895, 907, and 910 each coordinate Zn(2+).

It belongs to the class-I aminoacyl-tRNA synthetase family. IleS type 1 subfamily. In terms of assembly, monomer. Requires Zn(2+) as cofactor.

The protein localises to the cytoplasm. It catalyses the reaction tRNA(Ile) + L-isoleucine + ATP = L-isoleucyl-tRNA(Ile) + AMP + diphosphate. Catalyzes the attachment of isoleucine to tRNA(Ile). As IleRS can inadvertently accommodate and process structurally similar amino acids such as valine, to avoid such errors it has two additional distinct tRNA(Ile)-dependent editing activities. One activity is designated as 'pretransfer' editing and involves the hydrolysis of activated Val-AMP. The other activity is designated 'posttransfer' editing and involves deacylation of mischarged Val-tRNA(Ile). The chain is Isoleucine--tRNA ligase from Wolinella succinogenes (strain ATCC 29543 / DSM 1740 / CCUG 13145 / JCM 31913 / LMG 7466 / NCTC 11488 / FDC 602W) (Vibrio succinogenes).